We begin with the raw amino-acid sequence, 761 residues long: MTGNPAAPAATSVSPPAEQPYQELGLTDDEYARIIATLGRRPSDAELAMYSVMWSEHCSYKSSKVHLRQFRDTPLTDRLLVGMGENAGVVDVGEGLAVTFKIESHNHPSFVEPYQGAATGVGGIVRDILTMGARPIGVLDPLRFGEADAADTARVLPGVVAGIGGYGNCLGLPTIGGEVVFDPTYAGNPLVNALCVGVMPVDRVQTSAATGVGNAVVLLGAKTGRDGIGGVSILASATFDEGGGPARRPSVQVGDPFTEKILIETCLELFDRKLVTGIQDLGGAGLTCALTETTAAGIATGQPGGMEVDLDLVPLREASMAAHEVLASESQERMLAIVTPEALPEVLALAERWGVLATRIGTVTNSGRLTVRWHGEVVVDVPPGSLADDGPVYERPLRRPVDFDLVRADAPTPARLARPRTGPELRETLLRLVASPNLCSRAWVTDQYDRYVQAGTVLAQPEDAGVLRLSAATGLGIALATDGNGRYARLDPFAGTQLALAEACRNVAAAGSVPIAVTNCLNFGSPEDPEVMWQFAQACAGLAEGCRRLGLPVTGGNVSFYNQTGSTPIHPTPVIGVLGLFDDVTRRTPIGFAEEGDVLILLGETADEFGGSEWAWVTHRHLGGEPPAVDFAREKLLGEILVAGSRDGMLTAAHDLSDGGLAQALVESCLRGGHGARIILPAGSDPFVELFSESAGRAVVAVPRAEELRFTDMCEVRGLPWRRVGVVDGDTLDVQDAFTVGLDELRAAHEGTLPALFGRLT.

Residues 1–16 show a composition bias toward low complexity; it reads MTGNPAAPAATSVSPP. Residues 1–21 are disordered; that stretch reads MTGNPAAPAATSVSPPAEQPY. H57 is an active-site residue. Residues Y60 and K101 each contribute to the ATP site. Mg(2+) is bound at residue E103. Residues 104–107 and R126 contribute to the substrate site; that span reads SHNH. Catalysis depends on H105, which acts as the Proton acceptor. D127 contacts Mg(2+). Residue Q252 participates in substrate binding. Position 280 (D280) interacts with Mg(2+). 329-331 is a binding site for substrate; that stretch reads ESQ. 2 residues coordinate ATP: N519 and G556. A Mg(2+)-binding site is contributed by N557. S559 contributes to the substrate binding site.

This sequence belongs to the FGAMS family. In terms of assembly, monomer. Part of the FGAM synthase complex composed of 1 PurL, 1 PurQ and 2 PurS subunits.

The protein localises to the cytoplasm. The catalysed reaction is N(2)-formyl-N(1)-(5-phospho-beta-D-ribosyl)glycinamide + L-glutamine + ATP + H2O = 2-formamido-N(1)-(5-O-phospho-beta-D-ribosyl)acetamidine + L-glutamate + ADP + phosphate + H(+). Its pathway is purine metabolism; IMP biosynthesis via de novo pathway; 5-amino-1-(5-phospho-D-ribosyl)imidazole from N(2)-formyl-N(1)-(5-phospho-D-ribosyl)glycinamide: step 1/2. Its function is as follows. Part of the phosphoribosylformylglycinamidine synthase complex involved in the purines biosynthetic pathway. Catalyzes the ATP-dependent conversion of formylglycinamide ribonucleotide (FGAR) and glutamine to yield formylglycinamidine ribonucleotide (FGAM) and glutamate. The FGAM synthase complex is composed of three subunits. PurQ produces an ammonia molecule by converting glutamine to glutamate. PurL transfers the ammonia molecule to FGAR to form FGAM in an ATP-dependent manner. PurS interacts with PurQ and PurL and is thought to assist in the transfer of the ammonia molecule from PurQ to PurL. The chain is Phosphoribosylformylglycinamidine synthase subunit PurL from Frankia casuarinae (strain DSM 45818 / CECT 9043 / HFP020203 / CcI3).